A 316-amino-acid chain; its full sequence is Homoserine O-succinyltransferase (316 aa).

The Acyl-thioester intermediate role is filled by C142. Substrate contacts are provided by K163 and S192. H235 serves as the catalytic Proton acceptor. E237 is an active-site residue. Position 249 (R249) interacts with substrate.

Belongs to the MetA family.

The protein resides in the cytoplasm. The catalysed reaction is L-homoserine + succinyl-CoA = O-succinyl-L-homoserine + CoA. It functions in the pathway amino-acid biosynthesis; L-methionine biosynthesis via de novo pathway; O-succinyl-L-homoserine from L-homoserine: step 1/1. Transfers a succinyl group from succinyl-CoA to L-homoserine, forming succinyl-L-homoserine. This Shewanella amazonensis (strain ATCC BAA-1098 / SB2B) protein is Homoserine O-succinyltransferase.